A 217-amino-acid polypeptide reads, in one-letter code: Carboxylesterase Culp1 (217 aa).

The signal sequence occupies residues 1–32 (MTPRSLVRIVGVVVATTLALVSAPAGGRAAHA). Residues Cys-35 and Cys-107 are joined by a disulfide bond. Ser-118 (nucleophile) is an active-site residue. Cys-177 and Cys-184 form a disulfide bridge. Asp-181 is an active-site residue. His-193 serves as the catalytic Proton donor/acceptor.

Belongs to the cutinase family.

Its subcellular location is the secreted. It carries out the reaction a fatty acid ester + H2O = an aliphatic alcohol + a fatty acid + H(+). In terms of biological role, shows esterase activity, with a preference for short- and medium-chain fatty acids. This Mycobacterium bovis (strain ATCC BAA-935 / AF2122/97) protein is Carboxylesterase Culp1.